We begin with the raw amino-acid sequence, 433 residues long: Histidine--tRNA ligase (433 aa).

The protein belongs to the class-II aminoacyl-tRNA synthetase family. In terms of assembly, homodimer.

The protein localises to the cytoplasm. It carries out the reaction tRNA(His) + L-histidine + ATP = L-histidyl-tRNA(His) + AMP + diphosphate + H(+). This Azoarcus sp. (strain BH72) protein is Histidine--tRNA ligase.